Consider the following 252-residue polypeptide: Ubiquinone/menaquinone biosynthesis C-methyltransferase UbiE (252 aa).

S-adenosyl-L-methionine is bound by residues threonine 71, aspartate 100, 124-125 (DA), and serine 141.

It belongs to the class I-like SAM-binding methyltransferase superfamily. MenG/UbiE family.

It catalyses the reaction a 2-demethylmenaquinol + S-adenosyl-L-methionine = a menaquinol + S-adenosyl-L-homocysteine + H(+). The enzyme catalyses a 2-methoxy-6-(all-trans-polyprenyl)benzene-1,4-diol + S-adenosyl-L-methionine = a 5-methoxy-2-methyl-3-(all-trans-polyprenyl)benzene-1,4-diol + S-adenosyl-L-homocysteine + H(+). Its pathway is quinol/quinone metabolism; menaquinone biosynthesis; menaquinol from 1,4-dihydroxy-2-naphthoate: step 2/2. It participates in cofactor biosynthesis; ubiquinone biosynthesis. Methyltransferase required for the conversion of demethylmenaquinol (DMKH2) to menaquinol (MKH2) and the conversion of 2-polyprenyl-6-methoxy-1,4-benzoquinol (DDMQH2) to 2-polyprenyl-3-methyl-6-methoxy-1,4-benzoquinol (DMQH2). The protein is Ubiquinone/menaquinone biosynthesis C-methyltransferase UbiE of Caulobacter vibrioides (strain ATCC 19089 / CIP 103742 / CB 15) (Caulobacter crescentus).